We begin with the raw amino-acid sequence, 476 residues long: Bifunctional protein HldE (476 aa).

Residues 1–318 (MKPVLPDYSK…AEAVHGSKDT (318 aa)) are ribokinase. 195–198 (NMSE) contributes to the ATP binding site. The active site involves D264. A cytidylyltransferase region spans residues 344–476 (MTNGCFDILH…IIEAIKGGRG (133 aa)).

This sequence in the N-terminal section; belongs to the carbohydrate kinase PfkB family. It in the C-terminal section; belongs to the cytidylyltransferase family. As to quaternary structure, homodimer.

The enzyme catalyses D-glycero-beta-D-manno-heptose 7-phosphate + ATP = D-glycero-beta-D-manno-heptose 1,7-bisphosphate + ADP + H(+). It catalyses the reaction D-glycero-beta-D-manno-heptose 1-phosphate + ATP + H(+) = ADP-D-glycero-beta-D-manno-heptose + diphosphate. It functions in the pathway nucleotide-sugar biosynthesis; ADP-L-glycero-beta-D-manno-heptose biosynthesis; ADP-L-glycero-beta-D-manno-heptose from D-glycero-beta-D-manno-heptose 7-phosphate: step 1/4. It participates in nucleotide-sugar biosynthesis; ADP-L-glycero-beta-D-manno-heptose biosynthesis; ADP-L-glycero-beta-D-manno-heptose from D-glycero-beta-D-manno-heptose 7-phosphate: step 3/4. Functionally, catalyzes the phosphorylation of D-glycero-D-manno-heptose 7-phosphate at the C-1 position to selectively form D-glycero-beta-D-manno-heptose-1,7-bisphosphate. Its function is as follows. Catalyzes the ADP transfer from ATP to D-glycero-beta-D-manno-heptose 1-phosphate, yielding ADP-D-glycero-beta-D-manno-heptose. The chain is Bifunctional protein HldE from Vibrio cholerae serotype O1 (strain ATCC 39541 / Classical Ogawa 395 / O395).